The primary structure comprises 217 residues: Octanoyltransferase (217 aa).

Positions Lys31–Glu206 constitute a BPL/LPL catalytic domain. Substrate is bound by residues Arg70 to His77, Ser137 to Gly139, and Gly150 to Ala152. Cys168 acts as the Acyl-thioester intermediate in catalysis.

The protein belongs to the LipB family.

It localises to the cytoplasm. It carries out the reaction octanoyl-[ACP] + L-lysyl-[protein] = N(6)-octanoyl-L-lysyl-[protein] + holo-[ACP] + H(+). The protein operates within protein modification; protein lipoylation via endogenous pathway; protein N(6)-(lipoyl)lysine from octanoyl-[acyl-carrier-protein]: step 1/2. Its function is as follows. Catalyzes the transfer of endogenously produced octanoic acid from octanoyl-acyl-carrier-protein onto the lipoyl domains of lipoate-dependent enzymes. Lipoyl-ACP can also act as a substrate although octanoyl-ACP is likely to be the physiological substrate. The sequence is that of Octanoyltransferase from Pseudomonas aeruginosa (strain UCBPP-PA14).